We begin with the raw amino-acid sequence, 245 residues long: Orotidine 5'-phosphate decarboxylase (245 aa).

Substrate contacts are provided by residues Asp-22, Lys-44, Asp-71 to Thr-80, Thr-131, Arg-192, Gln-201, Gly-221, and Arg-222. The active-site Proton donor is Lys-73.

This sequence belongs to the OMP decarboxylase family. Type 1 subfamily. Homodimer.

It carries out the reaction orotidine 5'-phosphate + H(+) = UMP + CO2. It participates in pyrimidine metabolism; UMP biosynthesis via de novo pathway; UMP from orotate: step 2/2. Its function is as follows. Catalyzes the decarboxylation of orotidine 5'-monophosphate (OMP) to uridine 5'-monophosphate (UMP). In Salmonella newport (strain SL254), this protein is Orotidine 5'-phosphate decarboxylase.